A 399-amino-acid chain; its full sequence is L-methionine gamma-lyase (399 aa).

Pyridoxal 5'-phosphate contacts are provided by residues 59-61 (YTR) and 89-90 (GM). Residue Tyr-114 coordinates substrate. 209–211 (SAT) lines the pyridoxal 5'-phosphate pocket. N6-(pyridoxal phosphate)lysine is present on Lys-212. Arg-376 provides a ligand contact to substrate.

The protein belongs to the trans-sulfuration enzymes family. L-methionine gamma-lyase subfamily. As to quaternary structure, homotetramer; dimer of active dimers. Pyridoxal 5'-phosphate is required as a cofactor.

It carries out the reaction L-methionine + H2O = methanethiol + 2-oxobutanoate + NH4(+). Functionally, catalyzes the alpha,gamma-elimination of L-methionine to produce methanethiol, 2-oxobutanoate and ammonia. This Pseudomonas deceptionensis protein is L-methionine gamma-lyase.